Here is a 242-residue protein sequence, read N- to C-terminus: Biosynthetic peptidoglycan transglycosylase (242 aa).

A helical transmembrane segment spans residues 19-39; the sequence is ILAALAVFWGGGIALFSVVPV.

This sequence belongs to the glycosyltransferase 51 family.

It localises to the cell inner membrane. The enzyme catalyses [GlcNAc-(1-&gt;4)-Mur2Ac(oyl-L-Ala-gamma-D-Glu-L-Lys-D-Ala-D-Ala)](n)-di-trans,octa-cis-undecaprenyl diphosphate + beta-D-GlcNAc-(1-&gt;4)-Mur2Ac(oyl-L-Ala-gamma-D-Glu-L-Lys-D-Ala-D-Ala)-di-trans,octa-cis-undecaprenyl diphosphate = [GlcNAc-(1-&gt;4)-Mur2Ac(oyl-L-Ala-gamma-D-Glu-L-Lys-D-Ala-D-Ala)](n+1)-di-trans,octa-cis-undecaprenyl diphosphate + di-trans,octa-cis-undecaprenyl diphosphate + H(+). Its pathway is cell wall biogenesis; peptidoglycan biosynthesis. Peptidoglycan polymerase that catalyzes glycan chain elongation from lipid-linked precursors. This is Biosynthetic peptidoglycan transglycosylase from Salmonella agona (strain SL483).